Reading from the N-terminus, the 244-residue chain is Small ribosomal subunit protein uS2 (244 aa).

It belongs to the universal ribosomal protein uS2 family.

The protein is Small ribosomal subunit protein uS2 of Buchnera aphidicola subsp. Acyrthosiphon pisum (strain 5A).